The following is a 273-amino-acid chain: 4-hydroxy-tetrahydrodipicolinate reductase (273 aa).

NAD(+) is bound by residues 11–16 (GALGRM), 102–104 (GTT), and 126–129 (SPNF). His-159 serves as the catalytic Proton donor/acceptor. Residue His-160 coordinates (S)-2,3,4,5-tetrahydrodipicolinate. Lys-163 serves as the catalytic Proton donor. 169 to 170 (GT) serves as a coordination point for (S)-2,3,4,5-tetrahydrodipicolinate.

The protein belongs to the DapB family. As to quaternary structure, homotetramer.

The protein resides in the cytoplasm. It carries out the reaction (S)-2,3,4,5-tetrahydrodipicolinate + NAD(+) + H2O = (2S,4S)-4-hydroxy-2,3,4,5-tetrahydrodipicolinate + NADH + H(+). It catalyses the reaction (S)-2,3,4,5-tetrahydrodipicolinate + NADP(+) + H2O = (2S,4S)-4-hydroxy-2,3,4,5-tetrahydrodipicolinate + NADPH + H(+). It participates in amino-acid biosynthesis; L-lysine biosynthesis via DAP pathway; (S)-tetrahydrodipicolinate from L-aspartate: step 4/4. In terms of biological role, catalyzes the conversion of 4-hydroxy-tetrahydrodipicolinate (HTPA) to tetrahydrodipicolinate. In Buchnera aphidicola subsp. Cinara cedri (strain Cc), this protein is 4-hydroxy-tetrahydrodipicolinate reductase.